A 274-amino-acid polypeptide reads, in one-letter code: Large ribosomal subunit protein uL2cz/uL2cy (274 aa).

Disordered stretches follow at residues 1–22 and 223–274; these read MAIH…DSQV and MNPV…RRTK.

This sequence belongs to the universal ribosomal protein uL2 family. Part of the 50S ribosomal subunit.

The protein resides in the plastid. The protein localises to the chloroplast. The protein is Large ribosomal subunit protein uL2cz/uL2cy (rpl2-A) of Phaseolus vulgaris (Kidney bean).